A 692-amino-acid chain; its full sequence is Polyphosphate kinase (692 aa).

Asn57 provides a ligand contact to ATP. Residues Arg383 and Arg413 each coordinate Mg(2+). The active-site Phosphohistidine intermediate is His443. 3 residues coordinate ATP: Tyr476, Arg572, and His600.

This sequence belongs to the polyphosphate kinase 1 (PPK1) family. Mg(2+) is required as a cofactor. An intermediate of this reaction is the autophosphorylated ppk in which a phosphate is covalently linked to a histidine residue through a N-P bond.

It catalyses the reaction [phosphate](n) + ATP = [phosphate](n+1) + ADP. In terms of biological role, catalyzes the reversible transfer of the terminal phosphate of ATP to form a long-chain polyphosphate (polyP). In Acinetobacter baumannii (strain AYE), this protein is Polyphosphate kinase.